The primary structure comprises 427 residues: Serine--tRNA ligase (427 aa).

Position 231–233 (231–233 (TAE)) interacts with L-serine. 262–264 (RSE) is an ATP binding site. E285 serves as a coordination point for L-serine. Residue 349 to 352 (EISS) participates in ATP binding. S385 is a binding site for L-serine.

Belongs to the class-II aminoacyl-tRNA synthetase family. Type-1 seryl-tRNA synthetase subfamily. Homodimer. The tRNA molecule binds across the dimer.

It is found in the cytoplasm. The enzyme catalyses tRNA(Ser) + L-serine + ATP = L-seryl-tRNA(Ser) + AMP + diphosphate + H(+). It carries out the reaction tRNA(Sec) + L-serine + ATP = L-seryl-tRNA(Sec) + AMP + diphosphate + H(+). The protein operates within aminoacyl-tRNA biosynthesis; selenocysteinyl-tRNA(Sec) biosynthesis; L-seryl-tRNA(Sec) from L-serine and tRNA(Sec): step 1/1. Functionally, catalyzes the attachment of serine to tRNA(Ser). Is also able to aminoacylate tRNA(Sec) with serine, to form the misacylated tRNA L-seryl-tRNA(Sec), which will be further converted into selenocysteinyl-tRNA(Sec). The protein is Serine--tRNA ligase of Rhizobium etli (strain ATCC 51251 / DSM 11541 / JCM 21823 / NBRC 15573 / CFN 42).